The following is a 227-amino-acid chain: UPF0758 protein LPC_1989 (227 aa).

The region spanning Gln-102–Val-225 is the MPN domain. The Zn(2+) site is built by His-173, His-175, and Asp-186. Positions His-173–Asp-186 match the JAMM motif motif.

This sequence belongs to the UPF0758 family.

This chain is UPF0758 protein LPC_1989, found in Legionella pneumophila (strain Corby).